Here is a 218-residue protein sequence, read N- to C-terminus: Ras-related protein RabO (218 aa).

A GTP-binding site is contributed by 15 to 22 (GDYCVGKT). Positions 37–45 (RNCNIGVDF) match the Effector region motif. GTP-binding positions include 63-67 (DTGGQ) and 122-125 (NKID). C215 carries the post-translational modification Cysteine methyl ester. A lipid anchor (S-geranylgeranyl cysteine) is attached at C215. A propeptide spans 216–218 (FIL) (removed in mature form).

The protein belongs to the small GTPase superfamily. Rab family.

The protein localises to the cell membrane. This is Ras-related protein RabO (rabO) from Dictyostelium discoideum (Social amoeba).